Here is a 249-residue protein sequence, read N- to C-terminus: LexA repressor (249 aa).

The interval 1-25 (MAAAATGGRATSQPKKTTKGLTPRQ) is disordered. A DNA-binding region (H-T-H motif) is located at residues 45–65 (MREIGDTVGLASLSSVTHQLS). Active-site for autocatalytic cleavage activity residues include serine 173 and lysine 210.

It belongs to the peptidase S24 family. Homodimer.

It catalyses the reaction Hydrolysis of Ala-|-Gly bond in repressor LexA.. Functionally, represses a number of genes involved in the response to DNA damage (SOS response), including recA and lexA. In the presence of single-stranded DNA, RecA interacts with LexA causing an autocatalytic cleavage which disrupts the DNA-binding part of LexA, leading to derepression of the SOS regulon and eventually DNA repair. The sequence is that of LexA repressor from Pseudarthrobacter chlorophenolicus (strain ATCC 700700 / DSM 12829 / CIP 107037 / JCM 12360 / KCTC 9906 / NCIMB 13794 / A6) (Arthrobacter chlorophenolicus).